Consider the following 189-residue polypeptide: Putative manganese efflux pump MntP (189 aa).

The next 6 membrane-spanning stretches (helical) occupy residues 2 to 22 (SLTE…AVSI), 36 to 56 (ILQM…IGYY), 71 to 91 (WIAF…SITA), 106 to 126 (LLLV…VSLS), 132 to 152 (ILYS…AAIL), and 167 to 187 (IVGG…HMFF).

Belongs to the MntP (TC 9.B.29) family.

It is found in the cell membrane. In terms of biological role, probably functions as a manganese efflux pump. The chain is Putative manganese efflux pump MntP from Ruminiclostridium cellulolyticum (strain ATCC 35319 / DSM 5812 / JCM 6584 / H10) (Clostridium cellulolyticum).